Here is a 448-residue protein sequence, read N- to C-terminus: Homogentisate 1,2-dioxygenase (448 aa).

Residue His303 is the Proton acceptor of the active site. Residues His346 and Glu352 each coordinate Fe cation. Tyr361 and His382 together coordinate homogentisate. His382 is a binding site for Fe cation.

It belongs to the homogentisate dioxygenase family. As to quaternary structure, hexamer; dimer of trimers. It depends on Fe cation as a cofactor.

It catalyses the reaction homogentisate + O2 = 4-maleylacetoacetate + H(+). The protein operates within amino-acid degradation; L-phenylalanine degradation; acetoacetate and fumarate from L-phenylalanine: step 4/6. Its function is as follows. Involved in the catabolism of homogentisate (2,5-dihydroxyphenylacetate or 2,5-OH-PhAc), a central intermediate in the degradation of phenylalanine and tyrosine. Catalyzes the oxidative ring cleavage of the aromatic ring of homogentisate to yield maleylacetoacetate. The protein is Homogentisate 1,2-dioxygenase of Nitrobacter hamburgensis (strain DSM 10229 / NCIMB 13809 / X14).